A 382-amino-acid polypeptide reads, in one-letter code: Putative glutamate--cysteine ligase 2-1 (382 aa).

This sequence belongs to the glutamate--cysteine ligase type 2 family. YbdK subfamily.

It carries out the reaction L-cysteine + L-glutamate + ATP = gamma-L-glutamyl-L-cysteine + ADP + phosphate + H(+). ATP-dependent carboxylate-amine ligase which exhibits weak glutamate--cysteine ligase activity. This is Putative glutamate--cysteine ligase 2-1 from Frankia casuarinae (strain DSM 45818 / CECT 9043 / HFP020203 / CcI3).